A 689-amino-acid polypeptide reads, in one-letter code: Acyl-coenzyme A oxidase 1 (689 aa).

FAD contacts are provided by Thr149 and Gly188. Glu444 functions as the Proton acceptor in the catalytic mechanism.

This sequence belongs to the acyl-CoA oxidase family. As to quaternary structure, heteropentamer composed of five different subunits. Requires FAD as cofactor.

It is found in the peroxisome. It carries out the reaction a 2,3-saturated acyl-CoA + O2 = a (2E)-enoyl-CoA + H2O2. Its pathway is lipid metabolism; peroxisomal fatty acid beta-oxidation. The sequence is that of Acyl-coenzyme A oxidase 1 (POX1) from Yarrowia lipolytica (strain CLIB 122 / E 150) (Yeast).